The sequence spans 131 residues: Biogenesis of lysosome-related organelles complex 1 subunit CNL1 (131 aa).

The tract at residues 1 to 29 (MSAPDSNSGHAHDSAQNEGAAEGTRDPFG) is disordered. Residues 73 to 101 (DAIDINIEEMRRILQKCEELETHFDMLDQ) adopt a coiled-coil conformation.

This sequence belongs to the BLOC1S4 family. Component of the biogenesis of lysosome-related organelles complex-1 (BLOC-1).

It is found in the cytoplasm. Component of the biogenesis of lysosome-related organelles complex-1 (BLOC-1), a complex that is involved in endosomal cargo sorting. The protein is Biogenesis of lysosome-related organelles complex 1 subunit CNL1 (CLN1) of Lachancea thermotolerans (strain ATCC 56472 / CBS 6340 / NRRL Y-8284) (Yeast).